Consider the following 120-residue polypeptide: NAD(P)H-quinone oxidoreductase subunit 3, chloroplastic (120 aa).

3 consecutive transmembrane segments (helical) span residues 9-29, 64-84, and 88-108; these read IFWA…FISG, MFAL…PWAM, and VLGV…IVGS.

This sequence belongs to the complex I subunit 3 family. As to quaternary structure, NDH is composed of at least 16 different subunits, 5 of which are encoded in the nucleus.

The protein resides in the plastid. It is found in the chloroplast thylakoid membrane. The catalysed reaction is a plastoquinone + NADH + (n+1) H(+)(in) = a plastoquinol + NAD(+) + n H(+)(out). The enzyme catalyses a plastoquinone + NADPH + (n+1) H(+)(in) = a plastoquinol + NADP(+) + n H(+)(out). NDH shuttles electrons from NAD(P)H:plastoquinone, via FMN and iron-sulfur (Fe-S) centers, to quinones in the photosynthetic chain and possibly in a chloroplast respiratory chain. The immediate electron acceptor for the enzyme in this species is believed to be plastoquinone. Couples the redox reaction to proton translocation, and thus conserves the redox energy in a proton gradient. This Vitis vinifera (Grape) protein is NAD(P)H-quinone oxidoreductase subunit 3, chloroplastic.